An 89-amino-acid chain; its full sequence is Large ribosomal subunit protein uL29 (89 aa).

It belongs to the universal ribosomal protein uL29 family.

The polypeptide is Large ribosomal subunit protein uL29 (Frankia alni (strain DSM 45986 / CECT 9034 / ACN14a)).